The chain runs to 125 residues: Ribonuclease P protein component (125 aa).

The protein belongs to the RnpA family. As to quaternary structure, consists of a catalytic RNA component (M1 or rnpB) and a protein subunit.

It catalyses the reaction Endonucleolytic cleavage of RNA, removing 5'-extranucleotides from tRNA precursor.. RNaseP catalyzes the removal of the 5'-leader sequence from pre-tRNA to produce the mature 5'-terminus. It can also cleave other RNA substrates such as 4.5S RNA. The protein component plays an auxiliary but essential role in vivo by binding to the 5'-leader sequence and broadening the substrate specificity of the ribozyme. This is Ribonuclease P protein component from Idiomarina loihiensis (strain ATCC BAA-735 / DSM 15497 / L2-TR).